The following is a 356-amino-acid chain: Protein SEC13 homolog (356 aa).

6 WD repeats span residues E11–A50, G54–K95, N101–D142, A149–E205, A210–T253, and T259–R298. Residues I307–N356 form a disordered region. Positions Q308–N356 are enriched in low complexity.

This sequence belongs to the WD repeat SEC13 family. As to quaternary structure, probable component of the nuclear pore complex (NPC). Component of the GATOR complex consisting of mio, Nup44A/Seh1, Im11, Nplr3, Nplr2, Wdr24, Wdr59 and Sec13. Within the GATOR complex, probable component of the GATOR2 subcomplex which is likely composed of mio, Nup44A/Seh1, Wdr24, Wdr59 and Sec13. Interacts with msk. Interacts (preferentially when phosphorylated) with Mad. The GATOR2 complex associates with unmet in the absence of S-adenosyl-L-methionine; the mio-Wdr24-Nup44A subcomplex is essential and sufficient for this interaction while Wdr59 and Sec13 are dispensable. This association acts as a nutrient sensor to inhibit mTORC1 signaling in the absence of methionine. In terms of tissue distribution, salivary glands.

Its subcellular location is the nucleus envelope. The protein localises to the nucleus. It is found in the nucleoplasm. It localises to the cytoplasm. The protein resides in the cytoskeleton. Its subcellular location is the microtubule organizing center. The protein localises to the centrosome. It is found in the nuclear pore complex. It localises to the cytoplasmic vesicle. The protein resides in the COPII-coated vesicle membrane. Its subcellular location is the endoplasmic reticulum membrane. The protein localises to the lysosome membrane. Functions as a component of the nuclear pore complex (NPC) and the COPII coat. At the endoplasmic reticulum, SEC13 is involved in the biogenesis of COPII-coated vesicles. Recruited to transcriptionally active chromatin at the time of transcription initiation by RNA polymerase II. Required for proper expression of ecdysone-responsive genes such as Eip74EF and Eip75B during larval development. Required for reactivation of transcription after heat shock. Required for nuclear import of phosphorylated Mad via importin msk. Has no role in classical nuclear localization signal (cNLS)-dependent nuclear import via importin-beta. Its function is as follows. A component of the GATOR subcomplex GATOR2 which functions as an activator of the amino acid-sensing branch of the mTORC1 signaling pathway. The two GATOR subcomplexes, GATOR1 and GATOR2, regulate the mTORC1 pathway in order to mediate metabolic homeostasis, female gametogenesis and the response to amino acid limitation and complete starvation. GATOR2 activates the mTORC1 signaling pathway through the inhibition of the GATOR1 subcomplex, controlling the switch to cell proliferation and growth under nutrient replete conditions and during female oocyte development. This Drosophila melanogaster (Fruit fly) protein is Protein SEC13 homolog.